A 345-amino-acid polypeptide reads, in one-letter code: N-acetyl-gamma-glutamyl-phosphate reductase (345 aa).

The active site involves Cys-149.

This sequence belongs to the NAGSA dehydrogenase family. Type 1 subfamily.

The protein resides in the cytoplasm. The enzyme catalyses N-acetyl-L-glutamate 5-semialdehyde + phosphate + NADP(+) = N-acetyl-L-glutamyl 5-phosphate + NADPH + H(+). The protein operates within amino-acid biosynthesis; L-arginine biosynthesis; N(2)-acetyl-L-ornithine from L-glutamate: step 3/4. In terms of biological role, catalyzes the NADPH-dependent reduction of N-acetyl-5-glutamyl phosphate to yield N-acetyl-L-glutamate 5-semialdehyde. This is N-acetyl-gamma-glutamyl-phosphate reductase from Bacillus mycoides (strain KBAB4) (Bacillus weihenstephanensis).